The following is a 232-amino-acid chain: MAVVALVPAAGRGVRLGEKLPKAFVELGGCTMLARAVDGLRKSGAIDRVVVIVPPELVESVVADLGRASDVDVVGGGAERTDSVRAGLSAAGDADFVLVHDAARALTPPALIARVVDALRAGSSAVIPVLPVTDTIKSVDVLGAVTGTPLRSELRAVQTPQGFSTDVLRSAYDAGDVAATDDAALVERLGVSVQTIPGDALAFKITTPLDLVLARALLISETELSADSQDGK.

The protein belongs to the IspD/TarI cytidylyltransferase family. IspD subfamily.

It carries out the reaction 2-C-methyl-D-erythritol 4-phosphate + CTP + H(+) = 4-CDP-2-C-methyl-D-erythritol + diphosphate. The protein operates within isoprenoid biosynthesis; isopentenyl diphosphate biosynthesis via DXP pathway; isopentenyl diphosphate from 1-deoxy-D-xylulose 5-phosphate: step 2/6. Catalyzes the formation of 4-diphosphocytidyl-2-C-methyl-D-erythritol from CTP and 2-C-methyl-D-erythritol 4-phosphate (MEP). This is 2-C-methyl-D-erythritol 4-phosphate cytidylyltransferase from Rhodococcus erythropolis (strain PR4 / NBRC 100887).